Consider the following 377-residue polypeptide: Actin-related protein T2 (377 aa).

The protein belongs to the actin family.

The protein resides in the cytoplasm. It is found in the cytoskeleton. The chain is Actin-related protein T2 (Actrt2) from Mus musculus (Mouse).